A 402-amino-acid polypeptide reads, in one-letter code: MAVVKTTGKKDFDRSKEHINIGTIGHVDHGKTTLTAAISTVLAKRGLAEAKDYASIDAAPEEKARGITINTAHIEYSTDKRHYAHVDCPGHADYIKNMITGAAQMDGAILVVAATDGPMPQTREHILLSKQVGVPKMVVFLNKIDLLEGEEEMVDLVEVEIRELLSSYDFDGDNTPIIRGSARGALEGKPEWEAKVLELMDAVDSYIDSPVREMDKPFLMAVEDVFTITGRGTVATGKVERGQVKLNEEVEIVGYREEPKKTVITGIEMFNKNLQTAMAGDNAGVLLRGVDRKDIERGQVIAKPKTIIPHTKFKAAIYALKKEEGGRHTPFFKNYKPQFYFRTTDVTGGIEFEPGREMVIPGDNVDLTVELIAPIAVEQGTKFSIREGGRTVGAGTVTEIIK.

The tr-type G domain maps to 16 to 211; it reads KEHINIGTIG…AVDSYIDSPV (196 aa). Residues 25–32 form a G1 region; sequence GHVDHGKT. 25 to 32 contributes to the GTP binding site; the sequence is GHVDHGKT. Position 32 (T32) interacts with Mg(2+). A G2 region spans residues 66–70; it reads GITIN. The tract at residues 87–90 is G3; the sequence is DCPG. Residues 87–91 and 142–145 each bind GTP; these read DCPGH and NKID. Residues 142–145 are G4; sequence NKID. The interval 181 to 183 is G5; it reads SAR.

This sequence belongs to the TRAFAC class translation factor GTPase superfamily. Classic translation factor GTPase family. EF-Tu/EF-1A subfamily. Monomer.

The protein localises to the cytoplasm. It carries out the reaction GTP + H2O = GDP + phosphate + H(+). GTP hydrolase that promotes the GTP-dependent binding of aminoacyl-tRNA to the A-site of ribosomes during protein biosynthesis. The chain is Elongation factor Tu from Mesomycoplasma hyopneumoniae (strain J / ATCC 25934 / NCTC 10110) (Mycoplasma hyopneumoniae).